The chain runs to 54 residues: Large ribosomal subunit protein bL33 (54 aa).

It belongs to the bacterial ribosomal protein bL33 family.

The polypeptide is Large ribosomal subunit protein bL33 (Stenotrophomonas maltophilia (strain R551-3)).